The primary structure comprises 346 residues: Oxidoreductase calI (346 aa).

Residues 11-33 (VSTPQGRGDGRPTADQVLRDQDP) form a disordered region. Over residues 18–32 (GDGRPTADQVLRDQD) the composition is skewed to basic and acidic residues. Residues Leu-52, Lys-76, Asp-100, and Asn-128 each coordinate NADP(+). The active-site Proton donor is the Ser-181. Residues Tyr-208, Lys-212, and Ile-241 each coordinate NADP(+). Tyr-208 (proton acceptor) is an active-site residue. The active-site Lowers pKa of active site Tyr is the Lys-212.

It belongs to the short-chain dehydrogenases/reductases (SDR) family.

Its pathway is secondary metabolite biosynthesis. Oxidoreductase; part of the gene cluster that mediates the biosynthesis of calbistrin A and related compounds. Calbistrin A is a secondary metabolite with an interesting structure that was recently found to have bioactivity against leukemia cells. It consists of two polyketides linked by an ester bond: a bicyclic decalin containing polyketide and a linear 12 carbon dioic acid structure. The polyketide synthase calA is probably responsible for forming the decalin moiety. Because calA lacks a designated enoylreductase (ER) domain, the required activity is provided by the trans-enoyl reductase calK. Following release from the PKS, calF then probably catalyzes the oxidation and the subsequent Diels Alder cycloisomerization that lead to the formation of the decalin moiety. The decalin polyketide backbone includes two C-methyl groups, at C7 and C11 in backbone, of which the C7 position is probably methylated by the methyltransferase domain of calA. A candidate for adding the methyl group at C11, if not done by CalA, is the cluster methyltransferase calH. Several additional tailoring enzymes within the cluster could be involved in the modification of the decalin polyketide product. Those include the 3 cytochrome P450 monooxygenases CalE, CalG and CalL, of which one might be responsible for the introduction of the extra hydroxyl group attached to the backbone of the decalin moiety, at position C9 in the backbone, that allows for attachment of the linear moiety. One tailoring enzyme activity that is expected to be involved in biosynthesis of calbistrin is an acyltransferase for connecting the two polyketide synthase products, and which could be performed by the cluster acyltransferase calJ. The enzyme responsible for the biosynthesis of the linear moiety, probably a second PKS, has not been identified yet. This is Oxidoreductase calI from Penicillium decumbens.